The primary structure comprises 480 residues: Iroquois-class homeodomain protein IRX-1 (480 aa).

The homeobox; TALE-type DNA-binding region spans 127–189 (DPGRPKNATR…NARRRLKKEN (63 aa)). 3 disordered regions span residues 190–285 (KVTW…LGLV), 318–354 (SLAE…PLQH), and 401–480 (PHGP…LPSA). Over residues 210 to 232 (TEGDPEKAEDDEEIDLESIDIDQ) the composition is skewed to acidic residues. A Phosphoserine modification is found at Ser-241. Residues 254–263 (ARVAPPASAR) show a composition bias toward low complexity. Residues 264-280 (DQSSPLSAAETLKSQDS) show a composition bias toward polar residues. Residues 339–351 (SHASAHGPPSGSP) are compositionally biased toward low complexity.

This sequence belongs to the TALE/IRO homeobox family. In terms of tissue distribution, expressed in specific and overlapping patterns with Irx1 and Irx2 in the developing and adult metanephric kidney. In the adult metanephros, renal expression is found in the loop of Henle in the S3 proximal tubule segment and in the thick ascending limb (TAL) of the distal tubule.

It is found in the nucleus. The polypeptide is Iroquois-class homeodomain protein IRX-1 (Irx1) (Mus musculus (Mouse)).